A 145-amino-acid polypeptide reads, in one-letter code: Cytochrome c-type biogenesis protein CcmE (145 aa).

The Cytoplasmic portion of the chain corresponds to 1 to 7; sequence MKAKHQR. Residues 8 to 28 form a helical; Signal-anchor for type II membrane protein membrane-spanning segment; that stretch reads LILAVAALCGVAGAGVLAASA. The Periplasmic portion of the chain corresponds to 29 to 145; the sequence is LRDEAAYFRT…PKNMKAAVEG (117 aa). Heme is bound by residues H123 and Y127.

Belongs to the CcmE/CycJ family.

It is found in the cell inner membrane. Heme chaperone required for the biogenesis of c-type cytochromes. Transiently binds heme delivered by CcmC and transfers the heme to apo-cytochromes in a process facilitated by CcmF and CcmH. This Sphingopyxis alaskensis (strain DSM 13593 / LMG 18877 / RB2256) (Sphingomonas alaskensis) protein is Cytochrome c-type biogenesis protein CcmE.